The chain runs to 869 residues: Bifunctional uridylyltransferase/uridylyl-removing enzyme (869 aa).

The tract at residues 1–332 (MTATPADRPD…QFDGEAVPVQ (332 aa)) is uridylyltransferase. The tract at residues 333 to 691 (LDAGFSLRRG…RRAVPDNDAL (359 aa)) is uridylyl-removing. Positions 450–572 (VDQHTLMVLR…VGTRERLDYL (123 aa)) constitute an HD domain. 2 consecutive ACT domains span residues 692-771 (EVFV…PSRR) and 798-869 (RISL…LDPT).

This sequence belongs to the GlnD family. Mg(2+) serves as cofactor.

It carries out the reaction [protein-PII]-L-tyrosine + UTP = [protein-PII]-uridylyl-L-tyrosine + diphosphate. The catalysed reaction is [protein-PII]-uridylyl-L-tyrosine + H2O = [protein-PII]-L-tyrosine + UMP + H(+). Uridylyltransferase (UTase) activity is inhibited by glutamine, while glutamine activates uridylyl-removing (UR) activity. Modifies, by uridylylation and deuridylylation, the PII regulatory proteins (GlnB and homologs), in response to the nitrogen status of the cell that GlnD senses through the glutamine level. Under low glutamine levels, catalyzes the conversion of the PII proteins and UTP to PII-UMP and PPi, while under higher glutamine levels, GlnD hydrolyzes PII-UMP to PII and UMP (deuridylylation). Thus, controls uridylylation state and activity of the PII proteins, and plays an important role in the regulation of nitrogen assimilation and metabolism. The chain is Bifunctional uridylyltransferase/uridylyl-removing enzyme from Xanthomonas campestris pv. campestris (strain B100).